A 238-amino-acid chain; its full sequence is Urease accessory protein UreG (238 aa).

Residues 1 to 15 (MPPHLIDGEPHDHAH) show a composition bias toward basic and acidic residues. A disordered region spans residues 1–27 (MPPHLIDGEPHDHAHDRPKRQRTPGEP). GTP is bound at residue 34–41 (GPVGSGKT).

Belongs to the SIMIBI class G3E GTPase family. UreG subfamily. As to quaternary structure, homodimer. UreD, UreF and UreG form a complex that acts as a GTP-hydrolysis-dependent molecular chaperone, activating the urease apoprotein by helping to assemble the nickel containing metallocenter of UreC. The UreE protein probably delivers the nickel.

It localises to the cytoplasm. Its function is as follows. Facilitates the functional incorporation of the urease nickel metallocenter. This process requires GTP hydrolysis, probably effectuated by UreG. This Nocardia farcinica (strain IFM 10152) protein is Urease accessory protein UreG.